A 262-amino-acid chain; its full sequence is Plant intracellular Ras-group-related LRR protein 7 (262 aa).

9 LRR repeats span residues 19–42 (WRSTGIVALRDARLKVVPNEVLQV), 43–66 (GNSLRILDLTNNKIAEIPQEVGTL), 68–89 (NMQRLVLAGNLVESIPANIGYL), 90–112 (RNLKILTLDRNKISVLPEELGSL), 113–135 (SNLQQLSISQNSLSRLPKSVGDL), 137–158 (NMLLLNVSDNKLIALPESIGGC), 159–181 (SSLEELQANGNSIEDVPSSICNL), 182–204 (VCLKSLSLNGNKIRQLPQNLLKD), and 206–231 (KALQNISLHDNPISMDQFQQMDGFTE).

The protein belongs to the SHOC2 family. Widely expressed and preferentially in leaf sheathes.

In terms of biological role, leucine-rich repeat protein that likely mediates protein interactions, possibly in the context of signal transduction. The protein is Plant intracellular Ras-group-related LRR protein 7 (IRL7) of Oryza sativa subsp. japonica (Rice).